Here is a 384-residue protein sequence, read N- to C-terminus: Tetraacyldisaccharide 4'-kinase (384 aa).

ATP is bound at residue 72 to 79 (TAGGTGKT).

Belongs to the LpxK family.

It carries out the reaction a lipid A disaccharide + ATP = a lipid IVA + ADP + H(+). The protein operates within glycolipid biosynthesis; lipid IV(A) biosynthesis; lipid IV(A) from (3R)-3-hydroxytetradecanoyl-[acyl-carrier-protein] and UDP-N-acetyl-alpha-D-glucosamine: step 6/6. Its function is as follows. Transfers the gamma-phosphate of ATP to the 4'-position of a tetraacyldisaccharide 1-phosphate intermediate (termed DS-1-P) to form tetraacyldisaccharide 1,4'-bis-phosphate (lipid IVA). This chain is Tetraacyldisaccharide 4'-kinase, found in Halothermothrix orenii (strain H 168 / OCM 544 / DSM 9562).